Consider the following 79-residue polypeptide: Small ribosomal subunit protein bS18 (79 aa).

This sequence belongs to the bacterial ribosomal protein bS18 family. As to quaternary structure, part of the 30S ribosomal subunit. Forms a tight heterodimer with protein bS6.

Its function is as follows. Binds as a heterodimer with protein bS6 to the central domain of the 16S rRNA, where it helps stabilize the platform of the 30S subunit. This chain is Small ribosomal subunit protein bS18 (rpsR), found in Bacillus subtilis (strain 168).